The sequence spans 425 residues: Proteinase-activated receptor 1 (425 aa).

The N-terminal stretch at 1-21 (MGPRRLLLVAACLCLCGPLLS) is a signal peptide. A propeptide spans 22–41 (ARTRARRPASKATNATLDPR) (removed for receptor activation). Residues Asn-35, Asn-62, and Asn-75 are each glycosylated (N-linked (GlcNAc...) asparagine). At 42-102 (SFLLRNPNDK…SGYLTSSWLT (61 aa)) the chain is on the extracellular side. Residues 103-128 (LFVPSVYTGVFVVSLPVNIMAIVVFI) traverse the membrane as a helical segment. Residues 129–137 (LKMKVKKPA) are Cytoplasmic-facing. The helical transmembrane segment at 138–157 (VVYMLHLATADVLFVSVLPF) threads the bilayer. The Extracellular portion of the chain corresponds to 158–176 (KISYYLSGSDWQFGSELCR). Cys-175 and Cys-254 are disulfide-bonded. A helical transmembrane segment spans residues 177-198 (FVTAAFYCNMYASILLMTVISI). The Cytoplasmic portion of the chain corresponds to 199 to 218 (DRFLAVVYPMQSLSWRTLGR). The chain crosses the membrane as a helical span at residues 219 to 239 (ASFTCLAIWALAIAGVVPLLL). Residues 240 to 268 (KEQTIQVPGLNITTCHDVLNETLLEGYYA) lie on the Extracellular side of the membrane. N-linked (GlcNAc...) asparagine glycosylation is found at Asn-250 and Asn-259. The helical transmembrane segment at 269–288 (YYFSAFSAVFFFVPLIISTV) threads the bilayer. Over 289–311 (CYVSIIRCLSSSTVANRSKKSRA) the chain is Cytoplasmic. Residues 312-334 (LFLSAAVFCIFIICFGPTNILLI) traverse the membrane as a helical segment. Residues 335-350 (AHYSFLSHTSTTEAAY) lie on the Extracellular side of the membrane. Residues 351–374 (FAYLLCVCVSSISCCIDPLIYYYA) traverse the membrane as a helical segment. Topologically, residues 375–425 (SSECQRYVYSILCCKESSDPSSSNSSGQLMASKMDTCSSNLNNSIYKKLLT) are cytoplasmic. Residue Ser-418 is modified to Phosphoserine.

The protein belongs to the G-protein coupled receptor 1 family. Proteolytic cleavage by thrombin generates a new N-terminus that functions as a tethered ligand. Also proteolytically cleaved by cathepsin CTSG. Cleavage at 41-Arg-|-Ser-42 by CTSG results in receptor activation while cleavage at 55-Phe-|-Trp-56 results in inhibition of receptor activation. In terms of processing, phosphorylated in the C-terminal tail; probably mediating desensitization prior to the uncoupling and internalization of the receptor.

The protein resides in the cell membrane. Its function is as follows. High affinity receptor that binds the activated thrombin, leading to calcium release from intracellular stores. The thrombin-activated receptor signaling pathway is mediated through PTX-insensitive G proteins, activation of phospholipase C resulting in the production of 1D-myo-inositol 1,4,5-trisphosphate (InsP3) which binds to InsP3 receptors causing calcium release from the stores. In astrocytes, the calcium released into the cytosol allows the Ca(2+)-dependent release of L-glutamate into the synaptic cleft through BEST1, that targets the neuronal postsynaptic GRIN2A/NMDAR receptor resulting in the synaptic plasticity regulation. May play a role in platelets activation and in vascular development. Mediates up-regulation of pro-inflammatory cytokines, such as MCP-1/CCL2 and IL6, triggered by coagulation factor Xa (F10) in cardiac fibroblasts and umbilical vein endothelial cells. This is Proteinase-activated receptor 1 from Papio hamadryas (Hamadryas baboon).